The sequence spans 67 residues: Neurotoxin Os3 (67 aa).

The LCN-type CS-alpha/beta domain maps to 3 to 67; it reads RDGYIAQPHN…GVIVDGEKCH (65 aa). 4 disulfide bridges follow: cysteine 13-cysteine 66, cysteine 17-cysteine 39, cysteine 24-cysteine 48, and cysteine 28-cysteine 50.

The protein belongs to the long (4 C-C) scorpion toxin superfamily. Sodium channel inhibitor family. Alpha subfamily. In terms of tissue distribution, expressed by the venom gland.

Its subcellular location is the secreted. Functionally, binds to sodium channels (Nav) and inhibits the inactivation of the activated channels, thereby blocking neuronal transmission. In Orthochirus scrobiculosus (Central Asian scorpion), this protein is Neurotoxin Os3.